Here is a 454-residue protein sequence, read N- to C-terminus: Nucleoprotein (454 aa).

Residues 1–62 (MSFVPGQENA…ATTQPNSGSV (62 aa)) are disordered. Over residues 11–21 (GSRSSSGSRSG) the composition is skewed to low complexity. The span at 49–61 (PKQTATTQPNSGS) shows a compositional bias: polar residues. Residues 56–197 (QPNSGSVVPH…GFYVEGSGRS (142 aa)) are RNA-binding. Residues 64 to 193 (PHYSWFSGIT…VLPQGFYVEG (130 aa)) form the CoV N NTD domain. Arg109, Arg125, and Arg167 together coordinate RNA. 3 disordered regions span residues 159–230 (KTTA…STVK), 249–292 (AGQP…KRGP), and 382–428 (DGGA…RELT). Residue Ser170 is modified to Phosphoserine; by host. A Phosphothreonine; by host modification is found at Thr177. A compositionally biased stretch (low complexity) spans 193–212 (GSGRSAPASRSGSRSQSRGP). At Ser194 the chain carries Phosphoserine; by host. Positions 215 to 227 (RARSSSNQRQPAS) are enriched in polar residues. A CoV N CTD domain is found at 260–383 (AKEVRQKILN…ENLNAYQKDG (124 aa)). A compositionally biased stretch (basic residues) spans 267–277 (ILNKPRQKRTP). Residues 267-383 (ILNKPRQKRT…ENLNAYQKDG (117 aa)) form a dimerization region. Ser389 and Ser424 each carry phosphoserine; by host. Thr428 is modified (phosphothreonine; by host).

The protein belongs to the betacoronavirus nucleocapsid protein family. As to quaternary structure, homooligomer. Both monomeric and oligomeric forms interact with RNA. Interacts with protein M. Interacts with NSP3; this interaction serves to tether the genome to the newly translated replicase-transcriptase complex at a very early stage of infection. Post-translationally, ADP-ribosylated. The ADP-ribosylation is retained in the virion during infection. In terms of processing, phosphorylated on serine and threonine residues.

It is found in the virion. The protein localises to the host endoplasmic reticulum-Golgi intermediate compartment. The protein resides in the host Golgi apparatus. Its function is as follows. Packages the positive strand viral genome RNA into a helical ribonucleocapsid (RNP) and plays a fundamental role during virion assembly through its interactions with the viral genome and membrane protein M. Plays an important role in enhancing the efficiency of subgenomic viral RNA transcription as well as viral replication. In Murine coronavirus (strain S) (MHV-S), this protein is Nucleoprotein.